The following is a 359-amino-acid chain: Cysteine/Cysteine sulfinic acid decarboxylase (359 aa).

This sequence in the N-terminal section; belongs to the HFCD (homo-oligomeric flavin containing Cys decarboxylase) superfamily. The protein in the C-terminal section; belongs to the PPC synthetase family.

It carries out the reaction L-cysteine + H(+) = cysteamine + CO2. It catalyses the reaction 3-sulfino-L-alanine + H(+) = hypotaurine + CO2. Its activity is regulated as follows. Slightly stimulated in the presence of 1 mM Mg(2+). Its function is as follows. Catalyzes the decarboxylation of L-cysteine to cysteamine and of 3-sulfino-L-alanine (cysteine sulfinic acid) to hypotaurine. Also catalyzes the decarboxylation of various amino acids such as L-lysine, L-glutamate, L-asparaginate and L-proline. In vitro, shows highest activity with L-cysteine as substrate. The polypeptide is Cysteine/Cysteine sulfinic acid decarboxylase (Unknown prokaryotic organism).